A 417-amino-acid polypeptide reads, in one-letter code: UDP-N-acetylglucosamine 1-carboxyvinyltransferase (417 aa).

22–23 (KN) is a binding site for phosphoenolpyruvate. R93 is a binding site for UDP-N-acetyl-alpha-D-glucosamine. C117 (proton donor) is an active-site residue. Residue C117 is modified to 2-(S-cysteinyl)pyruvic acid O-phosphothioketal. UDP-N-acetyl-alpha-D-glucosamine is bound by residues 122–126 (RPVDQ), D304, and I326.

Belongs to the EPSP synthase family. MurA subfamily.

It localises to the cytoplasm. The enzyme catalyses phosphoenolpyruvate + UDP-N-acetyl-alpha-D-glucosamine = UDP-N-acetyl-3-O-(1-carboxyvinyl)-alpha-D-glucosamine + phosphate. The protein operates within cell wall biogenesis; peptidoglycan biosynthesis. Cell wall formation. Adds enolpyruvyl to UDP-N-acetylglucosamine. This Neisseria meningitidis serogroup C (strain 053442) protein is UDP-N-acetylglucosamine 1-carboxyvinyltransferase.